Here is a 469-residue protein sequence, read N- to C-terminus: DNA (cytosine-5-)-methyltransferase M.ApeKI (469 aa).

One can recognise an SAM-dependent MTase C5-type domain in the interval Tyr4–Val469. The active site involves Cys93.

It belongs to the class I-like SAM-binding methyltransferase superfamily. C5-methyltransferase family.

It catalyses the reaction a 2'-deoxycytidine in DNA + S-adenosyl-L-methionine = a 5-methyl-2'-deoxycytidine in DNA + S-adenosyl-L-homocysteine + H(+). Cytosine methylase that recognizes the double-stranded sequence 5'-GC(A/T)GC-3', methylates C-5 position of the second cytosine on both strands, and protects the DNA from cleavage by the ApeKI endonuclease. In Aeropyrum pernix (strain ATCC 700893 / DSM 11879 / JCM 9820 / NBRC 100138 / K1), this protein is DNA (cytosine-5-)-methyltransferase M.ApeKI.